Here is a 363-residue protein sequence, read N- to C-terminus: Phospho-N-acetylmuramoyl-pentapeptide-transferase (363 aa).

9 helical membrane-spanning segments follow: residues 13-33, 49-69, 95-115, 119-139, 154-174, 183-203, 224-244, 281-301, and 343-363; these read ISGI…AFFL, LPLL…IPLL, MGGI…SNFA, LAVS…DWQI, LALQ…NQPS, WVSF…FVLV, AIAL…LMVF, AVAL…IFFV, and ELQV…ICLA.

It belongs to the glycosyltransferase 4 family. MraY subfamily. Mg(2+) is required as a cofactor.

The protein resides in the cell inner membrane. The enzyme catalyses UDP-N-acetyl-alpha-D-muramoyl-L-alanyl-gamma-D-glutamyl-meso-2,6-diaminopimeloyl-D-alanyl-D-alanine + di-trans,octa-cis-undecaprenyl phosphate = di-trans,octa-cis-undecaprenyl diphospho-N-acetyl-alpha-D-muramoyl-L-alanyl-D-glutamyl-meso-2,6-diaminopimeloyl-D-alanyl-D-alanine + UMP. The protein operates within cell wall biogenesis; peptidoglycan biosynthesis. In terms of biological role, catalyzes the initial step of the lipid cycle reactions in the biosynthesis of the cell wall peptidoglycan: transfers peptidoglycan precursor phospho-MurNAc-pentapeptide from UDP-MurNAc-pentapeptide onto the lipid carrier undecaprenyl phosphate, yielding undecaprenyl-pyrophosphoryl-MurNAc-pentapeptide, known as lipid I. In Nostoc punctiforme (strain ATCC 29133 / PCC 73102), this protein is Phospho-N-acetylmuramoyl-pentapeptide-transferase.